A 385-amino-acid polypeptide reads, in one-letter code: 28S rRNA (uridine-N(3))-methyltransferase (385 aa).

Disordered stretches follow at residues 1–35 and 47–72; these read MAER…KKKW and QRAQ…NQGR. 2 stretches are compositionally biased toward basic and acidic residues: residues 15 to 35 and 47 to 58; these read HGQR…KKKW and QRAQEEEAKRQE. 4 residues coordinate S-adenosyl-L-methionine: arginine 293, glycine 313, asparagine 342, and threonine 343.

This sequence belongs to the class IV-like SAM-binding methyltransferase superfamily. In terms of assembly, interacts with INCA1.

It localises to the cytoplasm. The protein localises to the cytoskeleton. The protein resides in the spindle. Its subcellular location is the chromosome. It is found in the centromere. It localises to the kinetochore. The protein localises to the microtubule organizing center. The protein resides in the centrosome. The catalysed reaction is uridine in 28S rRNA + S-adenosyl-L-methionine = N(3)-methyluridine in 28S rRNA + S-adenosyl-L-homocysteine + H(+). In terms of biological role, S-adenosyl-L-methionine-dependent methyltransferase that specifically methylates the N3 position of a uridine in 28S rRNA. Required for association of the centrosomes with the poles of the bipolar mitotic spindle during metaphase. Also involved in chromosome alignment. May promote centrosome maturation probably by recruiting A-kinase anchor protein AKAP9 to centrosomes in early mitosis. Binds specifically to miRNA MIR145 hairpin, regulates MIR145 expression at a postranscriptional level. The sequence is that of 28S rRNA (uridine-N(3))-methyltransferase from Mus musculus (Mouse).